The primary structure comprises 172 residues: Transcriptional repressor NrdR (172 aa).

The segment at 3 to 34 (CPFCGAPDTRVIDSRLAGEGDQVRRRRECLSC) is a zinc-finger region. Residues 49–139 (PRVVKRDGSR…VYLSFADVQA (91 aa)) form the ATP-cone domain.

This sequence belongs to the NrdR family. Zn(2+) is required as a cofactor.

In terms of biological role, negatively regulates transcription of bacterial ribonucleotide reductase nrd genes and operons by binding to NrdR-boxes. This is Transcriptional repressor NrdR from Thioalkalivibrio sulfidiphilus (strain HL-EbGR7).